The primary structure comprises 622 residues: Phosphoribomutase (622 aa).

Residues Thr-57, Arg-61, 158–159, and Lys-168 each bind substrate; that span reads SH. The active-site Phosphoserine intermediate is the Ser-158. Mg(2+) is bound at residue Ser-158. Ser-158 bears the Phosphoserine mark. Mg(2+) is bound by residues Asp-325, Asp-327, and Asp-329. Substrate is bound by residues 329 to 330, Thr-404, 428 to 430, and Lys-442; these read DR and EEA.

Belongs to the phosphohexose mutase family. The cofactor is Mg(2+).

It localises to the cytoplasm. The protein localises to the nucleus. It carries out the reaction alpha-D-ribose 1-phosphate = D-ribose 5-phosphate. Its function is as follows. Major phosphoribomutase that converts ribose 1-phosphate to ribose 5-phosphate. Involved in ribose salvage via the pentose phosphate pathway. The polypeptide is Phosphoribomutase (Saccharomyces cerevisiae (strain ATCC 204508 / S288c) (Baker's yeast)).